The sequence spans 447 residues: Cobyrinate a,c-diamide synthase (447 aa).

A GATase cobBQ-type domain is found at 252–439; sequence KIAIAFDESF…AHQHAVGNPY (188 aa). C331 acts as the Nucleophile in catalysis.

Belongs to the CobB/CbiA family. Requires Mg(2+) as cofactor.

The enzyme catalyses cob(II)yrinate + 2 L-glutamine + 2 ATP + 2 H2O = cob(II)yrinate a,c diamide + 2 L-glutamate + 2 ADP + 2 phosphate + 2 H(+). It carries out the reaction Ni-sirohydrochlorin + 2 L-glutamine + 2 ATP + 2 H2O = Ni-sirohydrochlorin a,c-diamide + 2 L-glutamate + 2 ADP + 2 phosphate + 2 H(+). It functions in the pathway cofactor biosynthesis; adenosylcobalamin biosynthesis; cob(II)yrinate a,c-diamide from sirohydrochlorin (anaerobic route): step 10/10. Catalyzes the ATP-dependent amidation of the two carboxylate groups at positions a and c of cobyrinate, using either L-glutamine or ammonia as the nitrogen source. Involved in the biosynthesis of the unique nickel-containing tetrapyrrole coenzyme F430, the prosthetic group of methyl-coenzyme M reductase (MCR), which plays a key role in methanogenesis and anaerobic methane oxidation. Catalyzes the ATP-dependent amidation of the two carboxylate groups at positions a and c of Ni-sirohydrochlorin, using L-glutamine or ammonia as the nitrogen source. The polypeptide is Cobyrinate a,c-diamide synthase (Methanococcus vannielii (strain ATCC 35089 / DSM 1224 / JCM 13029 / OCM 148 / SB)).